Here is a 251-residue protein sequence, read N- to C-terminus: Protein unc-119 homolog B (251 aa).

Residues 1 to 13 are compositionally biased toward polar residues; the sequence is MSGSNPKAATAGS. Positions 1-56 are disordered; it reads MSGSNPKAATAGSQAGPGGLVAGKEEKKKAGGGVLNRLKARRQGPPHTPDDGSGAA. At Ser-2 the chain carries N-acetylserine. An N6-acetyllysine modification is found at Lys-24. Tetradecanoate is bound at residue Tyr-142.

The protein belongs to the PDE6D/unc-119 family. As to quaternary structure, found in a complex with ARL3, RP2 and UNC119B; RP2 induces hydrolysis of GTP ARL3 in the complex, leading to the release of UNC119B. Interacts with NPHP3 (when myristoylated). Interacts with CYS1 (when myristoylated). Interacts with MACIR; interaction only takes place when UNC119B is not liganded with myristoylated proteins.

It is found in the cell projection. It localises to the cilium. In terms of biological role, myristoyl-binding protein that acts as a cargo adapter: specifically binds the myristoyl moiety of a subset of N-terminally myristoylated proteins and is required for their localization. Binds myristoylated NPHP3 and plays a key role in localization of NPHP3 to the primary cilium membrane. Does not bind all myristoylated proteins. Probably plays a role in trafficking proteins in photoreceptor cells. The polypeptide is Protein unc-119 homolog B (Unc119b) (Mus musculus (Mouse)).